The following is a 173-amino-acid chain: NADH-ubiquinone oxidoreductase chain 6 (173 aa).

5 helical membrane passes run M1–S21, F27–G47, L53–L73, S86–W106, and Y139–L159.

It belongs to the complex I subunit 6 family.

The protein localises to the mitochondrion membrane. The enzyme catalyses a ubiquinone + NADH + 5 H(+)(in) = a ubiquinol + NAD(+) + 4 H(+)(out). In terms of biological role, core subunit of the mitochondrial membrane respiratory chain NADH dehydrogenase (Complex I) that is believed to belong to the minimal assembly required for catalysis. Complex I functions in the transfer of electrons from NADH to the respiratory chain. The immediate electron acceptor for the enzyme is believed to be ubiquinone. This chain is NADH-ubiquinone oxidoreductase chain 6 (MT-ND6), found in Salmo salar (Atlantic salmon).